We begin with the raw amino-acid sequence, 369 residues long: Gap junction alpha-5 protein (369 aa).

At 2 to 19 the chain is on the cytoplasmic side; the sequence is GDWSFLGEFLEEVHKHST. Residues 20-40 traverse the membrane as a helical segment; that stretch reads VVGKVWLTVLFIFRMLVLGTA. Topologically, residues 41–76 are extracellular; it reads AGPLWGDEQSDFMCDTQQPGCENVCYDKAFPISHVR. A helical transmembrane segment spans residues 77 to 97; sequence FWVLQIIFVSTPSLVYMGHAM. At 98–169 the chain is on the cytoplasmic side; the sequence is HTVRMEEKRK…YSILIRTAME (72 aa). A helical membrane pass occupies residues 170–190; it reads IAFIVGQYILYGIFLETLYIC. Topologically, residues 191–210 are extracellular; the sequence is QRAPCPHPVNCYVSRPTEKN. A helical transmembrane segment spans residues 211–231; sequence VFIIFMLAVAVLSLFLSLAEL. The Cytoplasmic portion of the chain corresponds to 232-369; sequence YHLGWKKAKE…SKARSDDLSV (138 aa). Residues 347-369 are disordered; it reads NEKRRFSKASRASSKARSDDLSV.

The protein belongs to the connexin family. Alpha-type (group II) subfamily. As to quaternary structure, a connexon is composed of a hexamer of connexins. In terms of tissue distribution, mostly in heart, and in the whole embryo, liver, stomach, and pectoral muscle.

The protein resides in the cell membrane. It localises to the cell junction. It is found in the gap junction. Its function is as follows. One gap junction consists of a cluster of closely packed pairs of transmembrane channels, the connexons, through which materials of low MW diffuse from one cell to a neighboring cell. This is Gap junction alpha-5 protein (GJA5) from Gallus gallus (Chicken).